The following is a 406-amino-acid chain: Kelch domain-containing protein 1 (406 aa).

6 Kelch repeats span residues 24-76 (FLYV…CGAC), 80-134 (RLYV…VYKD), 135-181 (RLIY…TKTR), 208-258 (KGYV…AITD), 260-307 (KLFL…ACLG), and 311-361 (EIMV…LKSQ).

As to quaternary structure, component of a CRL5 E3 ubiquitin-protein ligase complex, also named ECS (Elongin BC-CUL2/5-SOCS-box protein) complex, composed of CUL5, Elongin BC (ELOB and ELOC), RBX1 and substrate-specific adapter KLHDC1.

It is found in the cytoplasm. The protein localises to the cytosol. It functions in the pathway protein modification; protein ubiquitination. Its function is as follows. Substrate-recognition component of a Cul5-RING (CRL5) E3 ubiquitin-protein ligase complex of the DesCEND (destruction via C-end degrons) pathway, which recognizes a C-degron located at the extreme C terminus of target proteins, leading to their ubiquitination and degradation. The C-degron recognized by the DesCEND pathway is usually a motif of less than ten residues and can be present in full-length proteins, truncated proteins or proteolytically cleaved forms. The CRL5(KLHDC1) complex mediates ubiquitination and degradation of truncated SELENOS selenoprotein produced by failed UGA/Sec decoding, which ends with a glycine. The polypeptide is Kelch domain-containing protein 1 (Mus musculus (Mouse)).